The sequence spans 91 residues: Lactococcin-B immunity protein (91 aa).

In terms of biological role, imparts immunity to lactococcin-B to naturally sensitive host strains. The protein is Lactococcin-B immunity protein (lciB) of Lactococcus lactis subsp. cremoris (Streptococcus cremoris).